The chain runs to 121 residues: uncharacterized protein (121 aa).

It is found in the mitochondrion. This is an uncharacterized protein from Arabidopsis thaliana (Mouse-ear cress).